The primary structure comprises 140 residues: ATP synthase epsilon chain (140 aa).

This sequence belongs to the ATPase epsilon chain family. In terms of assembly, F-type ATPases have 2 components, CF(1) - the catalytic core - and CF(0) - the membrane proton channel. CF(1) has five subunits: alpha(3), beta(3), gamma(1), delta(1), epsilon(1). CF(0) has three main subunits: a, b and c.

Its subcellular location is the cell inner membrane. Its function is as follows. Produces ATP from ADP in the presence of a proton gradient across the membrane. The polypeptide is ATP synthase epsilon chain (Vibrio parahaemolyticus serotype O3:K6 (strain RIMD 2210633)).